Reading from the N-terminus, the 252-residue chain is Imidazole glycerol phosphate synthase subunit HisF (252 aa).

Active-site residues include D11 and D130.

Belongs to the HisA/HisF family. In terms of assembly, heterodimer of HisH and HisF.

It localises to the cytoplasm. The catalysed reaction is 5-[(5-phospho-1-deoxy-D-ribulos-1-ylimino)methylamino]-1-(5-phospho-beta-D-ribosyl)imidazole-4-carboxamide + L-glutamine = D-erythro-1-(imidazol-4-yl)glycerol 3-phosphate + 5-amino-1-(5-phospho-beta-D-ribosyl)imidazole-4-carboxamide + L-glutamate + H(+). Its pathway is amino-acid biosynthesis; L-histidine biosynthesis; L-histidine from 5-phospho-alpha-D-ribose 1-diphosphate: step 5/9. Functionally, IGPS catalyzes the conversion of PRFAR and glutamine to IGP, AICAR and glutamate. The HisF subunit catalyzes the cyclization activity that produces IGP and AICAR from PRFAR using the ammonia provided by the HisH subunit. The protein is Imidazole glycerol phosphate synthase subunit HisF of Staphylococcus epidermidis (strain ATCC 12228 / FDA PCI 1200).